The primary structure comprises 869 residues: Bifunctional uridylyltransferase/uridylyl-removing enzyme (869 aa).

Residues 1–332 (MTDTPAERPD…QFDGEATPEP (332 aa)) form a uridylyltransferase region. Residues 333 to 691 (LGGGFSLRRG…RRAVPDNDAL (359 aa)) are uridylyl-removing. The HD domain occupies 450-572 (VDQHTLMVLR…VGTRERLDYL (123 aa)). ACT domains are found at residues 692-774 (EVFV…RAVP) and 798-869 (RISL…LDPV).

Belongs to the GlnD family. Mg(2+) serves as cofactor.

It carries out the reaction [protein-PII]-L-tyrosine + UTP = [protein-PII]-uridylyl-L-tyrosine + diphosphate. It catalyses the reaction [protein-PII]-uridylyl-L-tyrosine + H2O = [protein-PII]-L-tyrosine + UMP + H(+). With respect to regulation, uridylyltransferase (UTase) activity is inhibited by glutamine, while glutamine activates uridylyl-removing (UR) activity. Modifies, by uridylylation and deuridylylation, the PII regulatory proteins (GlnB and homologs), in response to the nitrogen status of the cell that GlnD senses through the glutamine level. Under low glutamine levels, catalyzes the conversion of the PII proteins and UTP to PII-UMP and PPi, while under higher glutamine levels, GlnD hydrolyzes PII-UMP to PII and UMP (deuridylylation). Thus, controls uridylylation state and activity of the PII proteins, and plays an important role in the regulation of nitrogen assimilation and metabolism. The protein is Bifunctional uridylyltransferase/uridylyl-removing enzyme of Xanthomonas euvesicatoria pv. vesicatoria (strain 85-10) (Xanthomonas campestris pv. vesicatoria).